A 457-amino-acid chain; its full sequence is MTTDEGAKNNGESPTATVAEQGEDITSKKDRGVLKIVKRVGNGEETPMIGDKVYVHYKGKLSNGKKFDSSHDRNEPFVFSLGKGQVIKAWDIGVATMKKGEICHLLCKPEYAYGSAGSLPKIPSNATLFFEIELLDFKGEDLFEDGGIIRRTKRKGEGYSNPNEGATVEIHLEGRCGGRMFDCRDVAFTVGEGEDHVIPIGIDKALEKMQREEQCILYLGPRYGFGEAGKPKFGIEPNAELIYEVTLKSFEKAKESWEMDTKEKLEQAAIVKEKGTVYFKGGKYMQAVIQYGKIVSWLEMEYGLSEKESKASESFLLAAFLNLAMCYSKLREYTKAVECCDKALGLDSANGKGLYRRGEAQLLMNEFESAKGDFEKVLEVNPQNKAARLQISMCQKKAKEHNERDRRIYANMFKKFAEQDAKEEANKAMGKKTSEGVTNEKGTDSQAMEEEKPEGHV.

N-acetylmethionine is present on methionine 1. The disordered stretch occupies residues methionine 1 to threonine 26. Position 13 is a phosphoserine (serine 13). PPIase FKBP-type domains are found at residues glycine 50–lysine 138 and glycine 165–glutamate 251. 3 TPR repeats span residues alanine 268 to glutamate 301, leucine 317 to asparagine 350, and glycine 351 to asparagine 384. The tract at residues aspartate 420–valine 457 is disordered. Serine 445 is modified (phosphoserine).

Part of a heteromultimeric cytoplasmic complex with HSP90AA1, HSPA1A/HSPA1B and steroid receptors. Upon ligand binding dissociates from the complex and FKBP4 takes its place. Interacts with functionally mature heterooligomeric progesterone receptor complexes along with HSP90 and TEBP. Interacts with IFI44L; this interaction modulates the kinase activity of IKBKB and IKBKE. Interacts with IKBKB and IKBKE.

It localises to the cytoplasm. The protein resides in the nucleus. The enzyme catalyses [protein]-peptidylproline (omega=180) = [protein]-peptidylproline (omega=0). Its activity is regulated as follows. Inhibited by FK506 but not cyclosporin. In terms of biological role, immunophilin protein with PPIase and co-chaperone activities. Component of unligated steroid receptors heterocomplexes through interaction with heat-shock protein 90 (HSP90). Plays a role in the intracellular trafficking of heterooligomeric forms of steroid hormone receptors maintaining the complex into the cytoplasm when unliganded. Acts as a regulator of Akt/AKT1 activity by promoting the interaction between Akt/AKT1 and PHLPP1, thereby enhancing dephosphorylation and subsequent activation of Akt/AKT1. Interacts with IKBKE and IKBKB which facilitates IKK complex assembly leading to increased IKBKE and IKBKB kinase activity, NF-kappaB activation, and IFN production. This chain is Peptidyl-prolyl cis-trans isomerase FKBP5 (FKBP5), found in Pongo abelii (Sumatran orangutan).